The chain runs to 238 residues: Zinc import ATP-binding protein ZnuC (238 aa).

Residues 5–220 (IQLNNISVNF…SEFIAIFGNI (216 aa)) enclose the ABC transporter domain. 37–44 (GPNGAGKS) serves as a coordination point for ATP.

This sequence belongs to the ABC transporter superfamily. Zinc importer (TC 3.A.1.15.5) family. As to quaternary structure, the complex is composed of two ATP-binding proteins (ZnuC), two transmembrane proteins (ZnuB) and a solute-binding protein (ZnuA).

Its subcellular location is the cell membrane. It carries out the reaction Zn(2+)(out) + ATP(in) + H2O(in) = Zn(2+)(in) + ADP(in) + phosphate(in) + H(+)(in). Functionally, part of the ABC transporter complex ZnuABC involved in zinc import. Responsible for energy coupling to the transport system. This is Zinc import ATP-binding protein ZnuC from Buchnera aphidicola subsp. Baizongia pistaciae (strain Bp).